The sequence spans 325 residues: NADH-quinone oxidoreductase subunit H (325 aa).

The next 8 membrane-spanning stretches (helical) occupy residues 11–31, 81–101, 114–134, 154–174, 186–206, 237–257, 265–285, and 304–324; these read ILISVLKAVVILLVVVTCGAF, AIFTLAPVIAFTSLLLSFAIV, IGILFFLMMAGLAVYAVLFAG, LSYEVFLGLSLMGVVAQAGSF, VWNVIPQFFGFLTFAIAGVAV, FFVGEYIGIVTVSALIVTLFF, LPPFIWFALKTAFFMVMFILI, and VCLPLTLLNLLATAAVILYNA.

It belongs to the complex I subunit 1 family. As to quaternary structure, NDH-1 is composed of 13 different subunits. Subunits NuoA, H, J, K, L, M, N constitute the membrane sector of the complex.

The protein localises to the cell inner membrane. It carries out the reaction a quinone + NADH + 5 H(+)(in) = a quinol + NAD(+) + 4 H(+)(out). Its function is as follows. NDH-1 shuttles electrons from NADH, via FMN and iron-sulfur (Fe-S) centers, to quinones in the respiratory chain. The immediate electron acceptor for the enzyme in this species is believed to be ubiquinone. Couples the redox reaction to proton translocation (for every two electrons transferred, four hydrogen ions are translocated across the cytoplasmic membrane), and thus conserves the redox energy in a proton gradient. This subunit may bind ubiquinone. The protein is NADH-quinone oxidoreductase subunit H of Yersinia pseudotuberculosis serotype O:1b (strain IP 31758).